The primary structure comprises 290 residues: uncharacterized protein (290 aa).

The region spanning 2-238 (LKTENLSVGY…EIVNELYDLK (237 aa)) is the ABC transporter domain. 34 to 41 (GPNGAGKS) is an ATP binding site.

It belongs to the ABC transporter superfamily.

This is an uncharacterized protein from Methanocaldococcus jannaschii (strain ATCC 43067 / DSM 2661 / JAL-1 / JCM 10045 / NBRC 100440) (Methanococcus jannaschii).